The following is a 399-amino-acid chain: Acetylornithine aminotransferase (399 aa).

Pyridoxal 5'-phosphate-binding positions include 99-100 (GA) and Phe-132. Arg-135 contributes to the N(2)-acetyl-L-ornithine binding site. 217–220 (DEVQ) lines the pyridoxal 5'-phosphate pocket. Lys-246 bears the N6-(pyridoxal phosphate)lysine mark. Thr-274 provides a ligand contact to N(2)-acetyl-L-ornithine. Residue Thr-275 coordinates pyridoxal 5'-phosphate.

This sequence belongs to the class-III pyridoxal-phosphate-dependent aminotransferase family. ArgD subfamily. Homodimer. The cofactor is pyridoxal 5'-phosphate.

The protein resides in the cytoplasm. The enzyme catalyses N(2)-acetyl-L-ornithine + 2-oxoglutarate = N-acetyl-L-glutamate 5-semialdehyde + L-glutamate. Its pathway is amino-acid biosynthesis; L-arginine biosynthesis; N(2)-acetyl-L-ornithine from L-glutamate: step 4/4. This Agrobacterium fabrum (strain C58 / ATCC 33970) (Agrobacterium tumefaciens (strain C58)) protein is Acetylornithine aminotransferase.